A 38-amino-acid polypeptide reads, in one-letter code: Photosystem II reaction center protein L (38 aa).

A helical membrane pass occupies residues 17-37 (SLFWGLLLIFVLAVLFSSYFF).

This sequence belongs to the PsbL family. In terms of assembly, PSII is composed of 1 copy each of membrane proteins PsbA, PsbB, PsbC, PsbD, PsbE, PsbF, PsbH, PsbI, PsbJ, PsbK, PsbL, PsbM, PsbT, PsbX, PsbY, PsbZ, Psb30/Ycf12, at least 3 peripheral proteins of the oxygen-evolving complex and a large number of cofactors. It forms dimeric complexes.

The protein localises to the plastid. It is found in the chloroplast thylakoid membrane. Functionally, one of the components of the core complex of photosystem II (PSII). PSII is a light-driven water:plastoquinone oxidoreductase that uses light energy to abstract electrons from H(2)O, generating O(2) and a proton gradient subsequently used for ATP formation. It consists of a core antenna complex that captures photons, and an electron transfer chain that converts photonic excitation into a charge separation. This subunit is found at the monomer-monomer interface and is required for correct PSII assembly and/or dimerization. The chain is Photosystem II reaction center protein L from Zygnema circumcarinatum (Green alga).